The sequence spans 533 residues: WUSCHEL-related homeobox 7 (533 aa).

Disordered regions lie at residues 1 to 74 and 125 to 212; these read MASS…NPRP and SKNK…STQA. Low complexity predominate over residues 28–41; that stretch reads AGSPPSLLSGSSAG. Residues 59-68 show a composition bias toward basic and acidic residues; sequence GEERVPDPKP. Residues 65–129 constitute a DNA-binding region (homeobox; WUS-type); it reads DPKPRWNPRP…NRKSRSKNKL (65 aa). A compositionally biased stretch (gly residues) spans 132-143; the sequence is GGTGRAGLGLGG. Residues 161-174 are compositionally biased toward pro residues; it reads FTPPPPILPAPQPV. Positions 175–202 are enriched in low complexity; the sequence is QPQQQLVSPVAAPTSSSSSSSDRSSGSS.

The protein belongs to the WUS homeobox family.

It is found in the nucleus. Its function is as follows. Transcription factor which may be involved in developmental processes. The polypeptide is WUSCHEL-related homeobox 7 (WOX7) (Oryza sativa subsp. japonica (Rice)).